A 433-amino-acid chain; its full sequence is Glutamate-rich protein 2 (433 aa).

Disordered stretches follow at residues 56-86 (VPAA…LAPP), 113-161 (DSAS…KHPQ), 189-273 (SRQN…SIET), 308-344 (CLED…TRAP), and 394-433 (EKAQ…EDGS). Pro residues predominate over residues 63 to 85 (PAPPPPRALRPAPGPPRSAPLAP). The segment covering 114 to 127 (SASQARGSEPSSSA) has biased composition (polar residues). 2 stretches are compositionally biased toward basic and acidic residues: residues 199–214 (DPKE…EKPQ) and 244–258 (ARKE…DKVS). Over residues 259–273 (LKSSENRPSSRSIET) the composition is skewed to polar residues. 2 stretches are compositionally biased toward acidic residues: residues 308-334 (CLED…EDDE) and 397-433 (QEEE…EDGS).

In Rattus norvegicus (Rat), this protein is Glutamate-rich protein 2 (Erich2).